A 432-amino-acid chain; its full sequence is Amino acid transporter ANT1 (432 aa).

Residues 1–30 are disordered; sequence MAIKDLTATTGDSSLPLIKSPPSETTGGDR. Over 1–35 the chain is Cytoplasmic; it reads MAIKDLTATTGDSSLPLIKSPPSETTGGDRTSALQ. A helical membrane pass occupies residues 36–56; it reads TLGNIIVSIVGTGVLGLPYAF. Residues 57-62 are Lumenal-facing; the sequence is RIAGWL. The chain crosses the membrane as a helical span at residues 63 to 83; the sequence is AGSLGVIIVGFATYYCMLLLI. The Cytoplasmic portion of the chain corresponds to 84–115; it reads QCRDKLESEEGEEESKTYGDLGFKCMGTKGRY. A helical membrane pass occupies residues 116–136; sequence LTEFLIFTAQCGGSVAYLVFI. Residues 137-147 lie on the Lumenal side of the membrane; that stretch reads GRNLSSIFSSY. Residues 148 to 168 traverse the membrane as a helical segment; it reads GLSMVSFILILVPIEVGLSWI. Residues 169–172 lie on the Cytoplasmic side of the membrane; sequence TSLS. A helical transmembrane segment spans residues 173–193; the sequence is ALSPFSIFADICNIIAMCFVV. At 194 to 219 the chain is on the lumenal side; sequence KENVEMVIEGDFSFSDRTAISSTIGG. The helical transmembrane segment at 220–240 threads the bilayer; the sequence is LPFAGGVAVFCFEGFAMTLAL. Residues 241 to 256 lie on the Cytoplasmic side of the membrane; that stretch reads ESSMREREAFPKLLAK. A helical membrane pass occupies residues 257–277; sequence VLAGITFVYVLFGFCGYMAYG. Residues 278-292 lie on the Lumenal side of the membrane; the sequence is DQTKDIITLNLPNNW. The helical transmembrane segment at 293–313 threads the bilayer; the sequence is SAIAVQIGLCVGLTFTFPIMV. Residues 314–353 lie on the Cytoplasmic side of the membrane; it reads HPLNEIIEQKLKRIDWLQKHHNGYSNETGSVSKFAIFTTR. A helical transmembrane segment spans residues 354–374; sequence TLLVVGLAAIASLVPGFGTFA. Over 375-379 the chain is Lumenal; the sequence is SLVGS. A helical transmembrane segment spans residues 380 to 400; the sequence is TLCALISFVLPASYHLTLLGP. The Cytoplasmic portion of the chain corresponds to 401–410; it reads SLNVWNKSID. Residues 411–431 traverse the membrane as a helical segment; sequence VFIVICGLIFAVYGTYNTIVG. A topological domain (lumenal) is located at residue Val432.

The protein belongs to the amino acid/polyamine transporter 2 family. Amino acid/auxin permease (AAAP) (TC 2.A.18.8) subfamily. Ubiquitous. Highly expressed in flowers and cauline leaves and at lower levels in stems, leaves and roots.

The protein localises to the endoplasmic reticulum membrane. In terms of biological role, translocates aromatic and neutral amino acids such as tyrosine, tryptophan, phenylalanine, histidine, proline, leucine, valine, glutamine, as well as arginine. Transports the auxins indole-3-acetic acid (IAA) and 2,4-dichlorophenoxyacetic acid (2,4-D). This chain is Amino acid transporter ANT1, found in Arabidopsis thaliana (Mouse-ear cress).